Here is a 225-residue protein sequence, read N- to C-terminus: Small ribosomal subunit protein eS1 (225 aa).

It belongs to the eukaryotic ribosomal protein eS1 family.

The sequence is that of Small ribosomal subunit protein eS1 from Methanococcus maripaludis (strain C6 / ATCC BAA-1332).